Reading from the N-terminus, the 419-residue chain is Zinc finger CCCH domain-containing protein 62 (419 aa).

A C3H1-type zinc finger spans residues 89-116 (SLRKWVCKYWKDGKCKRGEQCQFLHSWS). 5 WD repeats span residues 129–168 (GHNK…CVHS), 210–247 (GVVG…ESDP), 256–293 (GHSG…CIMT), 296–335 (QHTG…KVVQ), and 383–419 (FSTH…GNKV).

The protein is Zinc finger CCCH domain-containing protein 62 (ZFWD4) of Arabidopsis thaliana (Mouse-ear cress).